A 455-amino-acid polypeptide reads, in one-letter code: Epoxide hydrolase 1 (455 aa).

The helical; Signal-anchor for type III membrane protein transmembrane segment at 1-21 (MWLEILLTSVLGFAIYWFISR) threads the bilayer. The Cytoplasmic portion of the chain corresponds to 22–455 (DKEETLPLED…RKFLSVLERQ (434 aa)). Aspartate 226 functions as the Nucleophile in the catalytic mechanism. Arginine 295 is modified (dimethylated arginine). The active-site Proton donor is the tyrosine 374. Catalysis depends on histidine 431, which acts as the Proton acceptor.

This sequence belongs to the peptidase S33 family. As to expression, found in liver.

Its subcellular location is the microsome membrane. It is found in the endoplasmic reticulum membrane. It catalyses the reaction cis-stilbene oxide + H2O = (1R,2R)-hydrobenzoin. It carries out the reaction 1-(4-methoxyphenyl)-N-methyl-N-[(3-methyloxetan-3-yl)methyl]methanamine + H2O = 2-{[(4-methoxybenzyl)(methyl)amino]methyl}-2-methylpropane-1,3-diol. The catalysed reaction is 8,9-epoxy-(5Z,11Z,14Z)-eicosatrienoate + H2O = 8,9-dihydroxy-(5Z,11Z,14Z)-eicosatrienoate. The enzyme catalyses 11,12-epoxy-(5Z,8Z,14Z)-eicosatrienoate + H2O = 11,12-dihydroxy-(5Z,8Z,14Z)-eicosatrienoate. It catalyses the reaction 2-(5Z,8Z,11Z,14Z-eicosatetraenoyl)-glycerol + H2O = glycerol + (5Z,8Z,11Z,14Z)-eicosatetraenoate + H(+). Inhibited by 10-hydroxystearamide and methoxy-arachidonyl fluorophosphate. Functionally, biotransformation enzyme that catalyzes the hydrolysis of arene and aliphatic epoxides to less reactive and more water soluble dihydrodiols by the trans addition of water. Plays a role in the metabolism of endogenous lipids such as epoxide-containing fatty acids. Metabolizes the abundant endocannabinoid 2-arachidonoylglycerol (2-AG) to free arachidonic acid (AA) and glycerol. Binds 20(S)-hydroxycholesterol (20(S)-OHC). The sequence is that of Epoxide hydrolase 1 from Homo sapiens (Human).